The chain runs to 972 residues: 116 kDa U5 small nuclear ribonucleoprotein component (972 aa).

Residue Met-1 is modified to N-acetylmethionine. Positions 1–54 are disordered; sequence MDTDLYDEFGNYIGPELDSDEDDDELGRETKDLDEMDDDDDDDDIGDHDDDHPG. 2 stretches are compositionally biased toward acidic residues: residues 17–26 and 34–48; these read LDSDEDDDEL and DEMDDDDDDDDIGDH. Ser-19 bears the Phosphoserine mark. Residue Lys-64 forms a Glycyl lysine isopeptide (Lys-Gly) (interchain with G-Cter in SUMO1); alternate linkage. Lys-64 participates in a covalent cross-link: Glycyl lysine isopeptide (Lys-Gly) (interchain with G-Cter in SUMO2); alternate. A Phosphothreonine modification is found at Thr-86. Positions 127–409 constitute a tr-type G domain; it reads ELIRNVTLCG…GIHLTKEELK (283 aa). GTP-binding positions include 136-143, 204-208, and 258-261; these read GHLHHGKT, DTPGH, and NKID.

It belongs to the TRAFAC class translation factor GTPase superfamily. Classic translation factor GTPase family. EF-G/EF-2 subfamily. As to quaternary structure, component of the U5 snRNP and the U4/U6-U5 tri-snRNP complex, a building block of the spliceosome. The U4/U6-U5 tri-snRNP complex is composed of the U4, U6 and U5 snRNAs and at least PRPF3, PRPF4, PRPF6, PRPF8, PRPF31, SNRNP200, TXNL4A, SNRNP40, DDX23, CD2BP2, PPIH, SNU13, EFTUD2, SART1 and USP39. Component of the pre-catalytic, catalytic and post-catalytic spliceosome complexes. Component of the minor spliceosome, which splices U12-type introns. Within this complex, interacts with CRIPT. Interacts with ERBB4 and PRPF8. Interacts with PIH1D1. Interacts with RPAP3 and URI1 in a ZNHIT2-dependent manner. Interacts with NRDE2. Interacts with FAM50A. Interacts with UBL5.

The protein localises to the nucleus. Required for pre-mRNA splicing as component of the spliceosome, including pre-catalytic, catalytic and post-catalytic spliceosomal complexes. Component of the U5 snRNP and the U4/U6-U5 tri-snRNP complex, a building block of the spliceosome. As a component of the minor spliceosome, involved in the splicing of U12-type introns in pre-mRNAs. This is 116 kDa U5 small nuclear ribonucleoprotein component (EFTUD2) from Pongo abelii (Sumatran orangutan).